The primary structure comprises 260 residues: uncharacterized protein (260 aa).

Residues 1-22 form the signal peptide; sequence MGYLKRFALYISILVLIVMVAG. Cysteine 23 is lipidated: N-palmitoyl cysteine. A lipid anchor (S-diacylglycerol cysteine) is attached at cysteine 23.

Belongs to the staphylococcal tandem lipoprotein family.

It localises to the cell membrane. This is an uncharacterized protein from Staphylococcus aureus (strain bovine RF122 / ET3-1).